The sequence spans 513 residues: Sphingolipid C9-methyltransferase (513 aa).

A run of 2 helical transmembrane segments spans residues 52 to 72 (ILFS…GLGF) and 74 to 94 (TWVF…WSIM). S-adenosyl-L-methionine contacts are provided by residues 222–223 (YT), 259–267 (VLDIGCGWG), 285–290 (TLGRNQ), and 315–316 (YR).

It belongs to the CFA/CMAS family.

Its subcellular location is the membrane. It catalyses the reaction a (4E,8E)-4-sphinga-4,8-dienine ceramide + S-adenosyl-L-methionine = a 9-methyl-(4E,8E)-sphinga-4,8-dienine ceramide + S-adenosyl-L-homocysteine + H(+). It functions in the pathway lipid metabolism; sphingolipid metabolism. Its function is as follows. Catalyzes methylation of the sphingoid base component of glucosylceramides (GluCers) at the C9-position. Sphingolipid C9-methylation requires 4,8-desaturated ceramides as substrates. Glucosylceramides play important roles in growth, differentiation and pathogenicity. The methyl group at the C9-position distinguishes fungal glucosylceramides from those of plants and animals, and may thus play a role in host-pathogen interactions enabling the host to recognize the fungal attack and initiate specific defense responses. Not necessary for vegetative growth at low temperatures, but plays a role in hyphal formation on solid medium. In Candida albicans (strain SC5314 / ATCC MYA-2876) (Yeast), this protein is Sphingolipid C9-methyltransferase.